Here is a 542-residue protein sequence, read N- to C-terminus: Signal peptide peptidase-like 5 (542 aa).

The signal sequence occupies residues 1-23; it reads MAAATAAVFALLMASALAGAAAG. The Lumenal segment spans residues 24–192; sequence GDIVHHDDEA…PDRPVVDTAE (169 aa). Residues Asn-79 and Asn-145 are each glycosylated (N-linked (GlcNAc...) asparagine). Residues 92–167 enclose the PA domain; the sequence is CTSPKEKVSG…LPRDAGFALH (76 aa). Residues 193–213 traverse the membrane as a helical segment; it reads VFLWLMAVGTVLCASYWSAWS. Residues 214 to 245 are Cytoplasmic-facing; that stretch reads AREALCEQEKLLKDGREVLLNVENGSSSGMID. The chain crosses the membrane as a helical span at residues 246–266; the sequence is INVASAIMFVVVASCFLIMLY. Topologically, residues 267–275 are lumenal; the sequence is KMMSSWFVE. A helical membrane pass occupies residues 276–296; sequence LLVVIFCVGGVEGLQTCLVAL. Topologically, residues 297–316 are cytoplasmic; the sequence is LSRWFRAASESFFKVPFFGA. Residues 317–337 form a helical membrane-spanning segment; the sequence is VSYLTLAVSPFCIVFAVLWAV. Residues 338–342 lie on the Lumenal side of the membrane; that stretch reads HRHFT. The chain crosses the membrane as a helical span at residues 343–363; that stretch reads YAWIGQDILGIALIITVIQIV. Residues 364–367 are Cytoplasmic-facing; sequence RVPN. A helical membrane pass occupies residues 368 to 388; that stretch reads LKVGSVLLSCAFFYDIFWVFV. The active site involves Asp-382. At 389 to 426 the chain is on the lumenal side; sequence SKRWFHESVMIVVARGDKTDEDGVPMLLKIPRMFDPWG. Residues 427–447 traverse the membrane as a helical segment; sequence GYSIIGFGDILLPGLLVAFAL. Asp-435 is an active-site residue. Residues 448–459 lie on the Cytoplasmic side of the membrane; sequence RYDWAAKKSLQT. The helical transmembrane segment at 460–480 threads the bilayer; that stretch reads GYFLWSMVAYGSGLLITYVAL. Residues 481-486 lie on the Lumenal side of the membrane; sequence NLMDGH. The chain crosses the membrane as a helical span at residues 487–507; it reads GQPALLYIVPFTLGALISLGW. The PAL signature appears at 489 to 491; it reads PAL. At 508 to 542 the chain is on the cytoplasmic side; that stretch reads KRGELWNLWSKGEPERVCPHHMHMQPQPKTPPLVQ.

Belongs to the peptidase A22B family. Glycosylated.

It is found in the endosome membrane. In terms of biological role, intramembrane-cleaving aspartic protease (I-CLiP) that cleaves type II membrane signal peptides in the hydrophobic plane of the membrane. The chain is Signal peptide peptidase-like 5 (SPPL5) from Oryza sativa subsp. japonica (Rice).